We begin with the raw amino-acid sequence, 98 residues long: uncharacterized protein (98 aa).

Residues 10 to 30 (LYGFFAVTGVLIASFIIGEIV) form a helical membrane-spanning segment.

The protein localises to the host membrane. This is an uncharacterized protein from Saccharolobus islandicus (Sulfolobus islandicus).